Reading from the N-terminus, the 363-residue chain is Peptide chain release factor 1 (363 aa).

N5-methylglutamine is present on glutamine 237. Positions 284-296 (EDEKRRSAEESTR) are enriched in basic and acidic residues. Residues 284-306 (EDEKRRSAEESTRRSLVASGDRS) form a disordered region.

This sequence belongs to the prokaryotic/mitochondrial release factor family. Post-translationally, methylated by PrmC. Methylation increases the termination efficiency of RF1.

Its subcellular location is the cytoplasm. Peptide chain release factor 1 directs the termination of translation in response to the peptide chain termination codons UAG and UAA. The sequence is that of Peptide chain release factor 1 from Shewanella oneidensis (strain ATCC 700550 / JCM 31522 / CIP 106686 / LMG 19005 / NCIMB 14063 / MR-1).